The following is a 114-amino-acid chain: Nucleoid-associated protein Cyan7425_0899 (114 aa).

The protein belongs to the YbaB/EbfC family. In terms of assembly, homodimer.

The protein localises to the cytoplasm. Its subcellular location is the nucleoid. Functionally, binds to DNA and alters its conformation. May be involved in regulation of gene expression, nucleoid organization and DNA protection. This is Nucleoid-associated protein Cyan7425_0899 from Cyanothece sp. (strain PCC 7425 / ATCC 29141).